A 510-amino-acid polypeptide reads, in one-letter code: Protein ERGIC-53 (510 aa).

A signal peptide spans methionine 1–glycine 30. At aspartate 31–serine 477 the chain is on the lumenal side. The region spanning arginine 44–leucine 267 is the L-type lectin-like domain. A carbohydrate-binding residues include serine 88 and aspartate 121. Residues aspartate 152, phenylalanine 154, and asparagine 156 each coordinate Ca(2+). Positions 156 and 178 each coordinate a carbohydrate. A Ca(2+)-binding site is contributed by aspartate 181. Cysteine 190 and cysteine 230 are joined by a disulfide. A carbohydrate is bound at residue glycine 251–leucine 253. At serine 425 the chain carries Phosphoserine. A helical transmembrane segment spans residues threonine 478–tyrosine 498. Topologically, residues arginine 499–phenylalanine 510 are cytoplasmic. Residues arginine 499–phenylalanine 510 form a mediates interaction with RAB3GAP1, RAB3GAP2 and UBXN6 region. The ER export motif motif lies at phenylalanine 509–phenylalanine 510.

Exists both as a covalent disulfide-linked homohexamer, and a complex of three disulfide-linked dimers non-covalently kept together. Interacts with MCFD2. May interact with TMEM115. Interacts with RAB3GAP1 and RAB3GAP2. Interacts with UBXN6. Interacts with SERPINA1/alpha1-antitrypsin. Interacts with BET1. The N-terminal may be partly blocked. Ubiquitous.

Its subcellular location is the endoplasmic reticulum-Golgi intermediate compartment membrane. It localises to the golgi apparatus membrane. It is found in the endoplasmic reticulum membrane. Its function is as follows. Mannose-specific lectin. May recognize sugar residues of glycoproteins, glycolipids, or glycosylphosphatidyl inositol anchors and may be involved in the sorting or recycling of proteins, lipids, or both. The LMAN1-MCFD2 complex forms a specific cargo receptor for the ER-to-Golgi transport of selected proteins. The protein is Protein ERGIC-53 (LMAN1) of Homo sapiens (Human).